A 247-amino-acid polypeptide reads, in one-letter code: Chalcone--flavanone isomerase (247 aa).

Residues threonine 56, asparagine 121, and serine 198 each coordinate substrate. The span at 223 to 235 shows a compositional bias: basic and acidic residues; sequence ENKVEEDATKTDQ. A disordered region spans residues 223–247; it reads ENKVEEDATKTDQEEANDLSLAKEN.

Belongs to the chalcone isomerase family.

It carries out the reaction a chalcone = a flavanone.. The protein operates within secondary metabolite biosynthesis; flavonoid biosynthesis. Catalyzes the intramolecular cyclization of bicyclic chalcones into tricyclic (S)-flavanones. Responsible for the isomerization of 4,2',4',6'-tetrahydroxychalcone (also termed chalcone) into naringenin. This chain is Chalcone--flavanone isomerase (CHI), found in Raphanus sativus (Radish).